The sequence spans 124 residues: Large-conductance mechanosensitive channel (124 aa).

The next 2 membrane-spanning stretches (helical) occupy residues 15–35 (MDLA…NSLV) and 67–87 (GSFL…FFLI).

The protein belongs to the MscL family. As to quaternary structure, homopentamer.

The protein resides in the cell membrane. In terms of biological role, channel that opens in response to stretch forces in the membrane lipid bilayer. May participate in the regulation of osmotic pressure changes within the cell. The polypeptide is Large-conductance mechanosensitive channel (Lactobacillus johnsonii (strain CNCM I-12250 / La1 / NCC 533)).